We begin with the raw amino-acid sequence, 500 residues long: ATP synthase subunit alpha (500 aa).

167–174 (GDRQTGKT) contacts ATP.

The protein belongs to the ATPase alpha/beta chains family. As to quaternary structure, F-type ATPases have 2 components, CF(1) - the catalytic core - and CF(0) - the membrane proton channel. CF(1) has five subunits: alpha(3), beta(3), gamma(1), delta(1), epsilon(1). CF(0) has three main subunits: a(1), b(2) and c(9-12). The alpha and beta chains form an alternating ring which encloses part of the gamma chain. CF(1) is attached to CF(0) by a central stalk formed by the gamma and epsilon chains, while a peripheral stalk is formed by the delta and b chains.

The protein localises to the cell inner membrane. It carries out the reaction ATP + H2O + 4 H(+)(in) = ADP + phosphate + 5 H(+)(out). Produces ATP from ADP in the presence of a proton gradient across the membrane. The alpha chain is a regulatory subunit. This chain is ATP synthase subunit alpha, found in Wolinella succinogenes (strain ATCC 29543 / DSM 1740 / CCUG 13145 / JCM 31913 / LMG 7466 / NCTC 11488 / FDC 602W) (Vibrio succinogenes).